A 134-amino-acid polypeptide reads, in one-letter code: Profilin-3 (134 aa).

A disulfide bridge connects residues Cys-13 and Cys-118. Residues 84-100 (AVIRGKKGSGGITIKKT) carry the Involved in PIP2 interaction motif. Thr-114 bears the Phosphothreonine mark.

This sequence belongs to the profilin family. As to quaternary structure, occurs in many kinds of cells as a complex with monomeric actin in a 1:1 ratio. Post-translationally, phosphorylated by MAP kinases.

It localises to the cytoplasm. The protein resides in the cytoskeleton. Functionally, binds to actin and affects the structure of the cytoskeleton. At high concentrations, profilin prevents the polymerization of actin, whereas it enhances it at low concentrations. By binding to PIP2, it inhibits the formation of IP3 and DG. The sequence is that of Profilin-3 (PRO3) from Olea europaea (Common olive).